Reading from the N-terminus, the 240-residue chain is Large ribosomal subunit protein bL25 (240 aa).

Disordered regions lie at residues 1-23 and 207-240; these read MATV…ARAE and PAAA…AKKK.

It belongs to the bacterial ribosomal protein bL25 family. CTC subfamily. Part of the 50S ribosomal subunit; part of the 5S rRNA/L5/L18/L25 subcomplex. Contacts the 5S rRNA. Binds to the 5S rRNA independently of L5 and L18.

In terms of biological role, this is one of the proteins that binds to the 5S RNA in the ribosome where it forms part of the central protuberance. The sequence is that of Large ribosomal subunit protein bL25 from Rhodopseudomonas palustris (strain BisB18).